Here is a 400-residue protein sequence, read N- to C-terminus: Large envelope protein (400 aa).

Methionine 1 is modified (N-acetylmethionine). Disordered regions lie at residues 1–53 (MGGW…DHWP), 88–118 (VPVAPPPASTNRQSGRQPTPISPPLRDSHPQ), and 145–169 (GSSSGTVNPVPTTASPISSISSRTG). Glycine 2 carries the N-myristoyl glycine; by host lipid modification. Positions 2 to 119 (GGWSSKPRQG…PPLRDSHPQA (118 aa)) are pre-S1. Residues 2–174 (GGWSSKPRQG…SSRTGDPAPN (173 aa)) are pre-S. Over 2-181 (GGWSSKPRQG…APNMENTTSG (180 aa)) the chain is Virion surface; in external conformation. Residues 2–253 (GGWSSKPRQG…PGYRWMCLRR (252 aa)) are Intravirion; in internal conformation-facing. Tryptophan 4 carries an N-linked (GlcNAc...) asparagine glycan. Residues 96–106 (STNRQSGRQPT) are compositionally biased toward polar residues. The segment at 120 to 174 (MQWNSTTFHQALLDPRVRGLYFPAGGSSSGTVNPVPTTASPISSISSRTGDPAPN) is pre-S2. The segment covering 155 to 166 (PTTASPISSISS) has biased composition (low complexity). The helical transmembrane segment at 182–202 (FLGPLLVLQAGFFLLTRILTI) threads the bilayer. At 203–253 (PQSLDSWWTSLNFLGGAPTCPGQNSQSPTSNHSPTSCPPICPGYRWMCLRR) the chain is on the intravirion; in external conformation side. The helical transmembrane segment at 254–274 (FIIFLFILLLCLIFLLVLLDY) threads the bilayer. Residues 275–348 (QGMLPVCPLL…GASVRFSWLS (74 aa)) lie on the Virion surface side of the membrane. Asparagine 320 is a glycosylation site (N-linked (GlcNAc...) asparagine; by host). The helical transmembrane segment at 349 to 369 (LLVPFVQWFVGLSPTVWLSVI) threads the bilayer. The Intravirion portion of the chain corresponds to 370-375 (WMMWYW). Residues 376–398 (GPSLYNILSPFLPLLPIFFCLWV) form a helical membrane-spanning segment. Residues 399 to 400 (YI) lie on the Virion surface side of the membrane.

This sequence belongs to the orthohepadnavirus major surface antigen family. In its internal form (Li-HBsAg), interacts with the capsid protein and with the isoform S. Interacts with host chaperone CANX. As to quaternary structure, associates with host chaperone CANX through its pre-S2 N glycan; this association may be essential for isoform M proper secretion. In terms of assembly, interacts with isoform L. Interacts with the antigens of satellite virus HDV (HDVAgs); this interaction is required for encapsidation of HDV genomic RNA. Post-translationally, isoform M is N-terminally acetylated by host at a ratio of 90%, and N-glycosylated by host at the pre-S2 region. Myristoylated.

It localises to the virion membrane. Functionally, the large envelope protein exists in two topological conformations, one which is termed 'external' or Le-HBsAg and the other 'internal' or Li-HBsAg. In its external conformation the protein attaches the virus to cell receptors and thereby initiating infection. This interaction determines the species specificity and liver tropism. This attachment induces virion internalization predominantly through caveolin-mediated endocytosis. The large envelope protein also assures fusion between virion membrane and endosomal membrane. In its internal conformation the protein plays a role in virion morphogenesis and mediates the contact with the nucleocapsid like a matrix protein. Its function is as follows. The middle envelope protein plays an important role in the budding of the virion. It is involved in the induction of budding in a nucleocapsid independent way. In this process the majority of envelope proteins bud to form subviral lipoprotein particles of 22 nm of diameter that do not contain a nucleocapsid. The protein is Large envelope protein of Hepatitis B virus genotype C subtype adr (strain Japan/adr4/1983) (HBV-C).